The primary structure comprises 338 residues: Glutaminase (338 aa).

Ser-80, Asn-130, Glu-174, Asn-181, Tyr-205, Tyr-257, and Val-275 together coordinate substrate.

Belongs to the glutaminase family. In terms of assembly, homotetramer.

The enzyme catalyses L-glutamine + H2O = L-glutamate + NH4(+). This is Glutaminase from Microcystis aeruginosa (strain NIES-843 / IAM M-2473).